Reading from the N-terminus, the 349-residue chain is Inositol 2-dehydrogenase (349 aa).

This sequence belongs to the Gfo/Idh/MocA family. Homotetramer.

The catalysed reaction is myo-inositol + NAD(+) = scyllo-inosose + NADH + H(+). In terms of biological role, involved in the oxidation of myo-inositol (MI) to 2-keto-myo-inositol (2KMI or 2-inosose). This is Inositol 2-dehydrogenase from Mycolicibacterium gilvum (strain PYR-GCK) (Mycobacterium gilvum (strain PYR-GCK)).